Here is a 143-residue protein sequence, read N- to C-terminus: MGKCRGLRTARKLRSHRRDQKWHDKQYKKAHLGTALKANPFGGASHAKGIVLEKVGVEAKQPNSAIRKCVRVQLIKNGKKITAFVPNDGCLNFIEENDEVLVAGFGRKGHAVGDIPGVRFKVVKVANVSLLALYKGKKERPRS.

Residues 1–20 (MGKCRGLRTARKLRSHRRDQ) show a composition bias toward basic residues. The disordered stretch occupies residues 1-26 (MGKCRGLRTARKLRSHRRDQKWHDKQ). Lys37 participates in a covalent cross-link: Glycyl lysine isopeptide (Lys-Gly) (interchain with G-Cter in SUMO2). Lys54 bears the N6-succinyllysine mark. Pro62 is modified (3-hydroxyproline). N6-acetyllysine is present on Lys135.

This sequence belongs to the universal ribosomal protein uS12 family. In terms of assembly, component of the 40S small ribosomal subunit. Part of the small subunit (SSU) processome, composed of more than 70 proteins and the RNA chaperone small nucleolar RNA (snoRNA) U3. Post-translationally, hydroxylation at Pro-62 affects translation termination efficiency.

It localises to the cytoplasm. The protein localises to the cytosol. It is found in the rough endoplasmic reticulum. Its subcellular location is the nucleus. The protein resides in the nucleolus. Component of the ribosome, a large ribonucleoprotein complex responsible for the synthesis of proteins in the cell. The small ribosomal subunit (SSU) binds messenger RNAs (mRNAs) and translates the encoded message by selecting cognate aminoacyl-transfer RNA (tRNA) molecules. The large subunit (LSU) contains the ribosomal catalytic site termed the peptidyl transferase center (PTC), which catalyzes the formation of peptide bonds, thereby polymerizing the amino acids delivered by tRNAs into a polypeptide chain. The nascent polypeptides leave the ribosome through a tunnel in the LSU and interact with protein factors that function in enzymatic processing, targeting, and the membrane insertion of nascent chains at the exit of the ribosomal tunnel. Plays an important role in translational accuracy. Part of the small subunit (SSU) processome, first precursor of the small eukaryotic ribosomal subunit. During the assembly of the SSU processome in the nucleolus, many ribosome biogenesis factors, an RNA chaperone and ribosomal proteins associate with the nascent pre-rRNA and work in concert to generate RNA folding, modifications, rearrangements and cleavage as well as targeted degradation of pre-ribosomal RNA by the RNA exosome. This is Small ribosomal subunit protein uS12 (RPS23) from Bos taurus (Bovine).